Reading from the N-terminus, the 76-residue chain is EMBRYO SURROUNDING FACTOR 1-like protein 8 (76 aa).

A signal peptide spans 1–22 (MSSSQFFILCIILISSFPLHEC). 4 disulfides stabilise this stretch: C38–C54, C43–C74, C52–C70, and C55–C63.

It belongs to the MEG family. In terms of tissue distribution, expressed in flowers.

The polypeptide is EMBRYO SURROUNDING FACTOR 1-like protein 8 (ESFL8) (Arabidopsis thaliana (Mouse-ear cress)).